The chain runs to 506 residues: Protein CYCLOPS (506 aa).

2 disordered regions span residues 193–223 (TVNS…LDNP) and 385–434 (KENL…RSST). Positions 202–219 (TPSQTPTFVSPSSSSTSP) are enriched in low complexity. Over residues 385-394 (KENLKDDRKK) the composition is skewed to basic and acidic residues. Positions 415–418 (KKRR) match the Nuclear localization signal motif. Basic and acidic residues predominate over residues 422-432 (SRKMAEAKERS). A coiled-coil region spans residues 441-506 (IQVVLKRCET…IERIVSDTNT (66 aa)).

It belongs to the CYCLOPS family. In terms of tissue distribution, highly epressed in roots. Expressed at very low levels in leaves, stems and panicles.

It localises to the nucleus. Its function is as follows. Involved in arbuscular mycorrhizal (AM) symbiosis. Required for fungal infection in roots and arbuscule development during AM symbiosis. The polypeptide is Protein CYCLOPS (Oryza sativa subsp. japonica (Rice)).